A 258-amino-acid polypeptide reads, in one-letter code: Imidazole glycerol phosphate synthase subunit HisF (258 aa).

Active-site residues include aspartate 11 and aspartate 130.

The protein belongs to the HisA/HisF family. Heterodimer of HisH and HisF.

It localises to the cytoplasm. It catalyses the reaction 5-[(5-phospho-1-deoxy-D-ribulos-1-ylimino)methylamino]-1-(5-phospho-beta-D-ribosyl)imidazole-4-carboxamide + L-glutamine = D-erythro-1-(imidazol-4-yl)glycerol 3-phosphate + 5-amino-1-(5-phospho-beta-D-ribosyl)imidazole-4-carboxamide + L-glutamate + H(+). It participates in amino-acid biosynthesis; L-histidine biosynthesis; L-histidine from 5-phospho-alpha-D-ribose 1-diphosphate: step 5/9. In terms of biological role, IGPS catalyzes the conversion of PRFAR and glutamine to IGP, AICAR and glutamate. The HisF subunit catalyzes the cyclization activity that produces IGP and AICAR from PRFAR using the ammonia provided by the HisH subunit. This chain is Imidazole glycerol phosphate synthase subunit HisF, found in Escherichia coli O1:K1 / APEC.